A 481-amino-acid chain; its full sequence is UDP-N-acetylmuramate--L-alanine ligase (481 aa).

123–129 contributes to the ATP binding site; sequence GTHGKTT.

Belongs to the MurCDEF family.

The protein resides in the cytoplasm. The catalysed reaction is UDP-N-acetyl-alpha-D-muramate + L-alanine + ATP = UDP-N-acetyl-alpha-D-muramoyl-L-alanine + ADP + phosphate + H(+). The protein operates within cell wall biogenesis; peptidoglycan biosynthesis. Cell wall formation. In Pseudomonas fluorescens (strain SBW25), this protein is UDP-N-acetylmuramate--L-alanine ligase.